The following is a 737-amino-acid chain: Pentatricopeptide repeat-containing protein At3g49740 (737 aa).

PPR repeat units follow at residues 20–55 (TLLN…TLRP), 56–90 (DQYS…GLLC), 91–121 (HSHV…IDEP), 122–152 (DVYS…MPER), 154–188 (DVAI…GVRH), 189–222 (DKFG…GFFI), 223–253 (ASSV…TDVA), 256–289 (DQVT…SLRP), 290–321 (TDLT…GYEK), 322–352 (YTLV…LEEK), 353–387 (DLVT…GVKP), 388–418 (DEFT…FGLS), 420–454 (KIEI…NLIS), 455–485 (WNAI…EVRI), 488–522 (DAYT…GQFK), 523–553 (ETLI…MSEK), 554–588 (DVVS…GKVI), 590–620 (DAAT…MVEF), and 626–656 (NVDH…SEKT). Residues 663–737 (VWWALFSACA…KQRGCSWMRL (75 aa)) form a type E motif; degenerate region.

Belongs to the PPR family. PCMP-E subfamily.

This is Pentatricopeptide repeat-containing protein At3g49740 (PCMP-E84) from Arabidopsis thaliana (Mouse-ear cress).